Consider the following 273-residue polypeptide: Large ribosomal subunit protein uL2cz/uL2cy (273 aa).

Disordered stretches follow at residues 1–23 (MAIH…SQVK) and 224–273 (NPVD…RRRK).

The protein belongs to the universal ribosomal protein uL2 family. Part of the 50S ribosomal subunit.

It localises to the plastid. The protein localises to the chloroplast. The protein is Large ribosomal subunit protein uL2cz/uL2cy (rpl2-A) of Amborella trichopoda.